The chain runs to 436 residues: MLLVSPACRGVYLQTIDPKPIDFSARASYALCFQIPTSIPKRECLMRLGTVFCFNQKHREQTSFKKRYVSTQNVDLPPILPKNKKKPYPIPFKQIQEEARKDKKLAQMGIEKQLDPPKNGLLVPNLVPVADQVIDNWKLLIKGLAQLLHVVPVFACSECGAVHVANVGHNIRDCNGPTNSQRRGSHSWVKGTINDVLIPVESYHMYDPFGRRIKHETRFEYERIPALVELCIQAGVEIPEYPCRRRTQPIRMMGKRVIDRGGYHKEPEKPQTSSSLSSPLAELDTLGVFERYPPPTPEDIPKIAQETMDAYEKVRLGVTKLMRKFTVKACGYCSEVHVGPWGHSVKLCGEFKHQWRDGKHGWQDALVDEVFPPNYVWHVRDLKGNPLTGNLRRFYGKAPALVEICMHSGARVPQRYKAMMRLDIIVPDSQEADMVA.

Residues 1–47 constitute a chloroplast transit peptide; it reads MLLVSPACRGVYLQTIDPKPIDFSARASYALCFQIPTSIPKRECLMR. APO domains are found at residues 155–240 and 329–414; these read ACSE…EIPE and ACGY…RVPQ.

It belongs to the APO family. As to expression, expressed at low level. Expressed at higher level in leaves. Expressed at lower level in roots, stems, siliques and flowers.

The protein resides in the plastid. Its subcellular location is the chloroplast. Functionally, involved in the stable assembly of several 4Fe-4S cluster-containing complexes of chloroplasts. May participate in 4Fe-4S cofactor incorporation into psaA and/or psaB during translation. The sequence is that of APO protein 1, chloroplastic (APO1) from Arabidopsis thaliana (Mouse-ear cress).